A 172-amino-acid chain; its full sequence is Adenine phosphoribosyltransferase (172 aa).

Belongs to the purine/pyrimidine phosphoribosyltransferase family. In terms of assembly, homodimer.

It is found in the cytoplasm. The enzyme catalyses AMP + diphosphate = 5-phospho-alpha-D-ribose 1-diphosphate + adenine. It functions in the pathway purine metabolism; AMP biosynthesis via salvage pathway; AMP from adenine: step 1/1. Its function is as follows. Catalyzes a salvage reaction resulting in the formation of AMP, that is energically less costly than de novo synthesis. This Clostridium botulinum (strain Alaska E43 / Type E3) protein is Adenine phosphoribosyltransferase.